The chain runs to 211 residues: Protein GrpE (211 aa).

Residues 1-43 (MTDETTKNGPDATAADAAADAAANVEIDNSVQEEAKQPDPLEL) are disordered. Positions 11–23 (DATAADAAADAAA) are enriched in low complexity. Over residues 33-43 (EEAKQPDPLEL) the composition is skewed to basic and acidic residues.

The protein belongs to the GrpE family. As to quaternary structure, homodimer.

It is found in the cytoplasm. Participates actively in the response to hyperosmotic and heat shock by preventing the aggregation of stress-denatured proteins, in association with DnaK and GrpE. It is the nucleotide exchange factor for DnaK and may function as a thermosensor. Unfolded proteins bind initially to DnaJ; upon interaction with the DnaJ-bound protein, DnaK hydrolyzes its bound ATP, resulting in the formation of a stable complex. GrpE releases ADP from DnaK; ATP binding to DnaK triggers the release of the substrate protein, thus completing the reaction cycle. Several rounds of ATP-dependent interactions between DnaJ, DnaK and GrpE are required for fully efficient folding. The protein is Protein GrpE of Rhizobium etli (strain ATCC 51251 / DSM 11541 / JCM 21823 / NBRC 15573 / CFN 42).